Reading from the N-terminus, the 520-residue chain is GMP synthase [glutamine-hydrolyzing] (520 aa).

Residues 9-202 (KILILDFGSQ…VRKICGCSGQ (194 aa)) form the Glutamine amidotransferase type-1 domain. C86 acts as the Nucleophile in catalysis. Active-site residues include H176 and E178. A GMPS ATP-PPase domain is found at 203–395 (WTPGHIIDDA…LGLPHQMVWR (193 aa)). 230-236 (SGGVDSS) contributes to the ATP binding site.

As to quaternary structure, homodimer.

The catalysed reaction is XMP + L-glutamine + ATP + H2O = GMP + L-glutamate + AMP + diphosphate + 2 H(+). It functions in the pathway purine metabolism; GMP biosynthesis; GMP from XMP (L-Gln route): step 1/1. Catalyzes the synthesis of GMP from XMP. The sequence is that of GMP synthase [glutamine-hydrolyzing] from Geobacter metallireducens (strain ATCC 53774 / DSM 7210 / GS-15).